Reading from the N-terminus, the 513-residue chain is Cyclin-dependent kinase C-2 (513 aa).

The Protein kinase domain occupies 25–325; it reads FEKLEQIGEG…AKDALDAEYF (301 aa). Residues 31 to 39 and Lys-54 each bind ATP; that span reads IGEGTYGQV. Thr-35 carries the post-translational modification Phosphothreonine. At Tyr-36 the chain carries Phosphotyrosine. Asp-164 acts as the Proton acceptor in catalysis. Ser-191 carries the phosphoserine modification. The residue at position 198 (Thr-198) is a Phosphothreonine. Residues 336-348 are compositionally biased toward basic and acidic residues; the sequence is SLPKYEASHEFQT. The interval 336–513 is disordered; the sequence is SLPKYEASHE…RNQQQYGNWQ (178 aa). Residues 417-433 show a composition bias toward low complexity; the sequence is PNRYPQGGNQGGYNPNR. Gly residues-rich tracts occupy residues 457–478 and 485–494; these read GGGMGGAGGPRGGGGSGYGVGG and GPYGASGPGR. Positions 497 to 513 are enriched in polar residues; that stretch reads NYNQGGSRNQQQYGNWQ.

Belongs to the protein kinase superfamily. CMGC Ser/Thr protein kinase family. CDC2/CDKX subfamily.

The catalysed reaction is L-seryl-[protein] + ATP = O-phospho-L-seryl-[protein] + ADP + H(+). It carries out the reaction L-threonyl-[protein] + ATP = O-phospho-L-threonyl-[protein] + ADP + H(+). The enzyme catalyses [DNA-directed RNA polymerase] + ATP = phospho-[DNA-directed RNA polymerase] + ADP + H(+). The polypeptide is Cyclin-dependent kinase C-2 (CDKC-2) (Oryza sativa subsp. japonica (Rice)).